The primary structure comprises 477 residues: Bifunctional protein HldE (477 aa).

A ribokinase region spans residues 1-319; sequence MTVIFPNFSK…NIMNSHICTT (319 aa). 195-198 contacts ATP; that stretch reads NISE. D264 is a catalytic residue. The segment at 346-477 is cytidylyltransferase; the sequence is MTNGVFDILH…NIINAIKRKN (132 aa).

The protein in the N-terminal section; belongs to the carbohydrate kinase PfkB family. In the C-terminal section; belongs to the cytidylyltransferase family. In terms of assembly, homodimer.

It catalyses the reaction D-glycero-beta-D-manno-heptose 7-phosphate + ATP = D-glycero-beta-D-manno-heptose 1,7-bisphosphate + ADP + H(+). It carries out the reaction D-glycero-beta-D-manno-heptose 1-phosphate + ATP + H(+) = ADP-D-glycero-beta-D-manno-heptose + diphosphate. The protein operates within nucleotide-sugar biosynthesis; ADP-L-glycero-beta-D-manno-heptose biosynthesis; ADP-L-glycero-beta-D-manno-heptose from D-glycero-beta-D-manno-heptose 7-phosphate: step 1/4. It participates in nucleotide-sugar biosynthesis; ADP-L-glycero-beta-D-manno-heptose biosynthesis; ADP-L-glycero-beta-D-manno-heptose from D-glycero-beta-D-manno-heptose 7-phosphate: step 3/4. Functionally, catalyzes the phosphorylation of D-glycero-D-manno-heptose 7-phosphate at the C-1 position to selectively form D-glycero-beta-D-manno-heptose-1,7-bisphosphate. Catalyzes the ADP transfer from ATP to D-glycero-beta-D-manno-heptose 1-phosphate, yielding ADP-D-glycero-beta-D-manno-heptose. This Blochmanniella pennsylvanica (strain BPEN) protein is Bifunctional protein HldE.